Reading from the N-terminus, the 103-residue chain is Large ribosomal subunit protein bL21 (103 aa).

It belongs to the bacterial ribosomal protein bL21 family. As to quaternary structure, part of the 50S ribosomal subunit. Contacts protein L20.

This protein binds to 23S rRNA in the presence of protein L20. The protein is Large ribosomal subunit protein bL21 of Lactobacillus johnsonii (strain CNCM I-12250 / La1 / NCC 533).